Consider the following 210-residue polypeptide: MADTKEMKKVLFGPILDNNPIALQILGVCSALAVTTKLETALVMSLALTAVTAFSNLFISMIRSQIPSSVRIIVQMTIIASLVIVVDQILKAYSYEISKQLSVFVGLIITNCIVMGRAEAFAMKSPPFISFLDGIGNGLGYSFVLIVIGTIKELFGFGTILGFEILPLIQNGGWYQGNGLLILPFSSFFLIGGLIWFIRTIKPEQVEPKE.

The next 6 helical transmembrane spans lie at 10–30 (VLFG…GVCS), 42–62 (LVMS…ISMI), 72–92 (IIVQ…ILKA), 103–123 (VFVG…AFAM), 143–163 (FVLI…ILGF), and 178–198 (NGLL…IWFI).

Belongs to the NqrDE/RnfAE family. Composed of six subunits; NqrA, NqrB, NqrC, NqrD, NqrE and NqrF.

The protein resides in the cell inner membrane. The catalysed reaction is a ubiquinone + n Na(+)(in) + NADH + H(+) = a ubiquinol + n Na(+)(out) + NAD(+). Its function is as follows. NQR complex catalyzes the reduction of ubiquinone-1 to ubiquinol by two successive reactions, coupled with the transport of Na(+) ions from the cytoplasm to the periplasm. NqrA to NqrE are probably involved in the second step, the conversion of ubisemiquinone to ubiquinol. In Pseudoalteromonas atlantica (strain T6c / ATCC BAA-1087), this protein is Na(+)-translocating NADH-quinone reductase subunit D.